The following is a 172-amino-acid chain: Endoribonuclease YbeY (172 aa).

Positions Met-1 to Arg-21 are disordered. Basic and acidic residues predominate over residues Ala-10–Arg-21. The Zn(2+) site is built by His-134, His-138, and His-144.

This sequence belongs to the endoribonuclease YbeY family. Zn(2+) is required as a cofactor.

The protein localises to the cytoplasm. Its function is as follows. Single strand-specific metallo-endoribonuclease involved in late-stage 70S ribosome quality control and in maturation of the 3' terminus of the 16S rRNA. The sequence is that of Endoribonuclease YbeY from Burkholderia lata (strain ATCC 17760 / DSM 23089 / LMG 22485 / NCIMB 9086 / R18194 / 383).